The sequence spans 563 residues: Cysteine--tRNA ligase, chloroplastic/mitochondrial (563 aa).

Zn(2+) is bound at residue Cys91. Gly92 lines the L-cysteine pocket. The 'HIGH' region motif lies at 93 to 103 (VTAYDLSHIGH). An L-cysteine-binding site is contributed by Thr131. Residues 136-139 (KIIA) carry the 'KIIK' region motif. Zn(2+)-binding residues include Cys271, His296, and Glu300. His296 is an L-cysteine binding site. Positions 328 to 332 (KMSKS) match the 'KMSKS' region motif. Lys331 contributes to the ATP binding site.

It belongs to the class-I aminoacyl-tRNA synthetase family. Requires Zn(2+) as cofactor.

It is found in the plastid. Its subcellular location is the chloroplast. The protein resides in the mitochondrion. The catalysed reaction is tRNA(Cys) + L-cysteine + ATP = L-cysteinyl-tRNA(Cys) + AMP + diphosphate. Its function is as follows. Required for female gametophyte development. Is necessary for the fusion of central cell nuclei and programmed cell death (PCD) of the antipodals. This is Cysteine--tRNA ligase, chloroplastic/mitochondrial from Arabidopsis thaliana (Mouse-ear cress).